The sequence spans 442 residues: UDP-N-acetylmuramate--L-alanine ligase (442 aa).

Residue 109–115 (GAHGKTS) coordinates ATP.

Belongs to the MurCDEF family.

The protein localises to the cytoplasm. The catalysed reaction is UDP-N-acetyl-alpha-D-muramate + L-alanine + ATP = UDP-N-acetyl-alpha-D-muramoyl-L-alanine + ADP + phosphate + H(+). It participates in cell wall biogenesis; peptidoglycan biosynthesis. In terms of biological role, cell wall formation. This is UDP-N-acetylmuramate--L-alanine ligase from Streptococcus pyogenes serotype M6 (strain ATCC BAA-946 / MGAS10394).